The chain runs to 817 residues: Two pore calcium channel protein 1 (817 aa).

At 1 to 101 (MSVILDDDVL…PKDARALAAY (101 aa)) the chain is on the cytoplasmic side. Positions 22–66 (PLTPSNGLGQEDLPSKNGGGQSGPNSQVPSLVSGADSPPSSPPGH) are disordered. A helical membrane pass occupies residues 102–122 (LFVHNHFFYMMELLTALLLLL). At 123 to 137 (LSLCESPAVPALKLR) the chain is on the extracellular side. The chain crosses the membrane as a helical span at residues 138–158 (TYVHATLELFALMVVVFELCM). The Cytoplasmic portion of the chain corresponds to 159-172 (KLRWLGFHTFVRHK). The chain crosses the membrane as a helical span at residues 173 to 193 (RTMVKTSVLVVQFIEAIVVLV). At 194–202 (RQTSHVRVT) the chain is on the extracellular side. Residues 203 to 221 (RALRCIFLVDCRYCGGVRR) form a helical membrane-spanning segment. The Cytoplasmic segment spans residues 222-235 (NLRQIFQSLPPFMD). The chain crosses the membrane as a helical span at residues 236–256 (ILLLLLFFMIIFAILGFYLFS). The Extracellular segment spans residues 257–263 (TNPSDPY). Residues 264–287 (FNTLENSIVNLFVLLTTANFPDVM) constitute an intramembrane region (helical; Pore-forming). At 288–298 (MPSYSRNPWSC) the chain is on the extracellular side. Residues 299–319 (VFFIVYLSIELYFIMNLLLAV) traverse the membrane as a helical segment. The Cytoplasmic portion of the chain corresponds to 320-445 (VFDTFNDIEK…NILVNSKAFQ (126 aa)). A helical membrane pass occupies residues 446–466 (YFMYLVVAVNGVWILVETFML). At 467-480 (KGGNFISKHVPWSY) the chain is on the extracellular side. Residues 481–501 (LVFLTIYGVELFMKVAGLGPV) traverse the membrane as a helical segment. Topologically, residues 502–504 (EYL) are cytoplasmic. The helical transmembrane segment at 505–527 (SSGWNLFDFSVTAFAFLGLLALT) threads the bilayer. At 528–535 (LNMEPFYF) the chain is on the extracellular side. A helical membrane pass occupies residues 536–550 (IVVLRPLQLLRLFKL). Topologically, residues 551-574 (KKRYRNVLDTMFELLPRMASLGLT) are cytoplasmic. The chain crosses the membrane as a helical span at residues 575 to 595 (LLTFYYSFAIVGMEFFSGRLS). The Extracellular segment spans residues 596–630 (PNCCNSSTVADAYRFINHTVGNKTKVEEGYYYLNN). An intramembrane region (helical; Pore-forming) is located at residues 631-654 (FDNILNSFVTLFELTVVNNWYIIM). At 655-671 (EGVTSQTSHWSRLYFMT) the chain is on the extracellular side. A helical membrane pass occupies residues 672-692 (FYIVTMVVMTIIVAFILEAFV). The Cytoplasmic portion of the chain corresponds to 693 to 817 (FRMNYSRKSQ…GSRQRSQTVT (125 aa)). The stretch at 770–794 (SLKMYQEEIQEWYEEHAREQEQQQL) forms a coiled coil. Residues 785–817 (HAREQEQQQLRGSAPSPAAQQTPGSRQRSQTVT) are disordered. Polar residues predominate over residues 802–817 (AAQQTPGSRQRSQTVT).

It belongs to the calcium channel alpha-1 subunit (TC 1.A.1.11) family. Two pore calcium channel subfamily. Dimer. Interacts with MTOR; the interaction is required for TPCN1 ATP sensitivity. Interacts with STX7, STX8 and STX12. Interacts with JPT2. Found in a complex with LSM12, TPCN1 and TPCN2. In terms of processing, N-glycosylated. Widely expressed. Expressed at relatively high level in kidney, liver and lung, and in the kidney it is expressed at inner medullary collecting ducts.

It is found in the lysosome membrane. Its subcellular location is the endosome membrane. The protein resides in the early endosome membrane. It localises to the recycling endosome membrane. The enzyme catalyses Na(+)(in) = Na(+)(out). It carries out the reaction Ca(2+)(in) = Ca(2+)(out). With respect to regulation, na(+) current is inhibited by ATP in a MTORC-dependent manner. ATP sensitivity is independent of PI(3,5)P2. Probably regulated by Mg(2+) ions, cytosolic Mg(2+) selectively inhibits outward current while lysosomal Mg(2+) modestly inhibits both the outward and inward currents. In the absence of Mg(2+), NAADP readily activates TPCN2, with properties similar to PI(3,5)P2. Both current elicited by PI(3,5)P2 as well as NAADP are inhibited by tetrandrine. Its function is as follows. Intracellular channel initially characterized as a non-selective Ca(2+)-permeable channel activated by NAADP (nicotinic acid adenine dinucleotide phosphate), it is also a voltage-gated highly-selective Na(+) channel activated directly by PI(3,5)P2 (phosphatidylinositol 3,5-bisphosphate) that senses pH changes and confers electrical excitability to organelles. Localizes to the early and recycling endosomes membranes where it plays a role in the uptake and processing of proteins and regulates organellar membrane excitability, membrane trafficking and pH homeostasis. Ion selectivity is not fixed but rather agonist-dependent and under defined ionic conditions, can be readily activated by both NAADP and PI(3,5)P2. Required for mTOR-dependent nutrient sensing. The protein is Two pore calcium channel protein 1 (Tpcn1) of Rattus norvegicus (Rat).